The primary structure comprises 151 residues: Large ribosomal subunit protein eL19 (151 aa).

The segment covering Lys-57 to Gly-81 has biased composition (basic residues). Residues Lys-57–Glu-95 form a disordered region.

The protein belongs to the eukaryotic ribosomal protein eL19 family. In terms of assembly, part of the 50S ribosomal subunit.

Functionally, binds to the 23S rRNA. The sequence is that of Large ribosomal subunit protein eL19 from Methanocaldococcus jannaschii (strain ATCC 43067 / DSM 2661 / JAL-1 / JCM 10045 / NBRC 100440) (Methanococcus jannaschii).